We begin with the raw amino-acid sequence, 388 residues long: Probable proton-coupled zinc antiporter SLC30A3 (388 aa).

The tract at residues 1-46 is disordered; it reads MEPSPAAGGLETTRLVSPRDRGGAGGSLRLKSLFTEPSEPLPEESK. Over 1–75 the chain is Cytoplasmic; it reads MEPSPAAGGL…TPERLHARRQ (75 aa). The helical transmembrane segment at 76–96 threads the bilayer; it reads LYAACAVCFVFMAGEVVGGYL. Residues 97-105 lie on the Lumenal side of the membrane; that stretch reads AHSLAIMTD. A helical membrane pass occupies residues 106–126; that stretch reads AAHLLADVGSMMGSLFSLWLS. Residues histidine 108 and aspartate 112 each contribute to the Zn(2+) site. At 127 to 145 the chain is on the cytoplasmic side; sequence TRPATRTMTFGWHRSETLG. Residues 146–166 form a helical membrane-spanning segment; it reads ALASVVSLWMVTGILLYLAFV. Residues 167 to 177 lie on the Lumenal side of the membrane; sequence RLLHSDYHIEG. A helical membrane pass occupies residues 178-198; it reads GAMLLTASIAVCANLLMAFVL. Topologically, residues 199–235 are cytoplasmic; that stretch reads HQAGPPHSHGSRGAEYAPLEEGPEEPLPLGNTSVRAA. Residues 236-256 form a helical membrane-spanning segment; the sequence is FVHVLGDLLQSFGVLAASILI. Histidine 238 and aspartate 242 together coordinate Zn(2+). The Lumenal portion of the chain corresponds to 257–264; it reads YFKPQYKA. Residues 265 to 285 traverse the membrane as a helical segment; that stretch reads ADPISTFLFSICALGSTAPTL. The Cytoplasmic portion of the chain corresponds to 286-388; the sequence is RDVLRILMEG…CLRCQEPPQA (103 aa). Tyrosine 357 is covalently cross-linked (Dityrosine (Tyr-Tyr) (interchain with Y-372)). Tyrosine 372 is covalently cross-linked (Dityrosine (Tyr-Tyr) (interchain with Y-357)).

Belongs to the cation diffusion facilitator (CDF) transporter (TC 2.A.4) family. SLC30A subfamily. Homodimer; dityrosine-linked. Homodimerization seems specific of the human protein and enhances the zinc transport efficiency. Interacts with TMEM163. Homodimerization through dityrosine bonds is stimulated by oxidative stress.

It localises to the cytoplasmic vesicle. Its subcellular location is the secretory vesicle. The protein localises to the synaptic vesicle membrane. The protein resides in the synapse. It is found in the synaptosome. It localises to the late endosome membrane. Its subcellular location is the lysosome membrane. The catalysed reaction is Zn(2+)(in) + 2 H(+)(out) = Zn(2+)(out) + 2 H(+)(in). Functionally, probable proton-coupled zinc ion antiporter mediating the import of zinc from cytoplasm into synaptic vesicles and participating to cellular zinc ion homeostasis in the brain. This is Probable proton-coupled zinc antiporter SLC30A3 from Homo sapiens (Human).